Here is a 213-residue protein sequence, read N- to C-terminus: Imidazole glycerol phosphate synthase subunit HisH (213 aa).

A Glutamine amidotransferase type-1 domain is found at 8–213 (TVALIDYGAG…FLSRFLDWNP (206 aa)). The active-site Nucleophile is the C91. Residues H193 and E195 contribute to the active site.

In terms of assembly, heterodimer of HisH and HisF.

It localises to the cytoplasm. It catalyses the reaction 5-[(5-phospho-1-deoxy-D-ribulos-1-ylimino)methylamino]-1-(5-phospho-beta-D-ribosyl)imidazole-4-carboxamide + L-glutamine = D-erythro-1-(imidazol-4-yl)glycerol 3-phosphate + 5-amino-1-(5-phospho-beta-D-ribosyl)imidazole-4-carboxamide + L-glutamate + H(+). The enzyme catalyses L-glutamine + H2O = L-glutamate + NH4(+). Its pathway is amino-acid biosynthesis; L-histidine biosynthesis; L-histidine from 5-phospho-alpha-D-ribose 1-diphosphate: step 5/9. IGPS catalyzes the conversion of PRFAR and glutamine to IGP, AICAR and glutamate. The HisH subunit catalyzes the hydrolysis of glutamine to glutamate and ammonia as part of the synthesis of IGP and AICAR. The resulting ammonia molecule is channeled to the active site of HisF. This Zymomonas mobilis subsp. mobilis (strain ATCC 31821 / ZM4 / CP4) protein is Imidazole glycerol phosphate synthase subunit HisH.